The primary structure comprises 228 residues: Cytochrome c oxidase subunit 2 (228 aa).

At 1–26 (MPNWGQVMFQDAASSVMLQLVSFHDH) the chain is on the mitochondrial intermembrane side. The helical transmembrane segment at 27–47 (ALLVLTLVLTVVGYALLALML) threads the bilayer. Residues 48–60 (NKQVNRYIMEAQT) lie on the Mitochondrial matrix side of the membrane. A helical transmembrane segment spans residues 61-81 (VETIWTILPALILLVLALPSL). At 82–228 (RILYITDEVS…FMSWVSNFKP (147 aa)) the chain is on the mitochondrial intermembrane side. The Cu cation site is built by H161, C196, E198, C200, H204, and M207. Residue E198 participates in Mg(2+) binding.

This sequence belongs to the cytochrome c oxidase subunit 2 family. Component of the cytochrome c oxidase (complex IV, CIV), a multisubunit enzyme composed of a catalytic core of 3 subunits and several supernumerary subunits. The complex exists as a monomer or a dimer and forms supercomplexes (SCs) in the inner mitochondrial membrane with ubiquinol-cytochrome c oxidoreductase (cytochrome b-c1 complex, complex III, CIII). The cofactor is Cu cation.

Its subcellular location is the mitochondrion inner membrane. It carries out the reaction 4 Fe(II)-[cytochrome c] + O2 + 8 H(+)(in) = 4 Fe(III)-[cytochrome c] + 2 H2O + 4 H(+)(out). In terms of biological role, component of the cytochrome c oxidase, the last enzyme in the mitochondrial electron transport chain which drives oxidative phosphorylation. The respiratory chain contains 3 multisubunit complexes succinate dehydrogenase (complex II, CII), ubiquinol-cytochrome c oxidoreductase (cytochrome b-c1 complex, complex III, CIII) and cytochrome c oxidase (complex IV, CIV), that cooperate to transfer electrons derived from NADH and succinate to molecular oxygen, creating an electrochemical gradient over the inner membrane that drives transmembrane transport and the ATP synthase. Cytochrome c oxidase is the component of the respiratory chain that catalyzes the reduction of oxygen to water. Electrons originating from reduced cytochrome c in the intermembrane space (IMS) are transferred via the dinuclear copper A center (CU(A)) of subunit 2 and heme A of subunit 1 to the active site in subunit 1, a binuclear center (BNC) formed by heme A3 and copper B (CU(B)). The BNC reduces molecular oxygen to 2 water molecules using 4 electrons from cytochrome c in the IMS and 4 protons from the mitochondrial matrix. In Lumbricus terrestris (Common earthworm), this protein is Cytochrome c oxidase subunit 2 (COII).